Here is a 140-residue protein sequence, read N- to C-terminus: 6,7-dimethyl-8-ribityllumazine synthase (140 aa).

5-amino-6-(D-ribitylamino)uracil is bound by residues phenylalanine 11, 43 to 45, and 67 to 69; these read SFD and CVI. 72 to 73 is a (2S)-2-hydroxy-3-oxobutyl phosphate binding site; sequence DT. Residue histidine 75 is the Proton donor of the active site. Leucine 100 lines the 5-amino-6-(D-ribitylamino)uracil pocket. Residue arginine 115 participates in (2S)-2-hydroxy-3-oxobutyl phosphate binding.

It belongs to the DMRL synthase family. In terms of assembly, forms an icosahedral capsid composed of 60 subunits, arranged as a dodecamer of pentamers.

The catalysed reaction is (2S)-2-hydroxy-3-oxobutyl phosphate + 5-amino-6-(D-ribitylamino)uracil = 6,7-dimethyl-8-(1-D-ribityl)lumazine + phosphate + 2 H2O + H(+). Its pathway is cofactor biosynthesis; riboflavin biosynthesis; riboflavin from 2-hydroxy-3-oxobutyl phosphate and 5-amino-6-(D-ribitylamino)uracil: step 1/2. Catalyzes the formation of 6,7-dimethyl-8-ribityllumazine by condensation of 5-amino-6-(D-ribitylamino)uracil with 3,4-dihydroxy-2-butanone 4-phosphate. This is the penultimate step in the biosynthesis of riboflavin. The sequence is that of 6,7-dimethyl-8-ribityllumazine synthase from Methanococcus vannielii (strain ATCC 35089 / DSM 1224 / JCM 13029 / OCM 148 / SB).